A 220-amino-acid chain; its full sequence is Iron-sulfur cluster repair protein YtfE (220 aa).

The protein belongs to the RIC family. YtfE subfamily. Homodimer.

The protein localises to the cytoplasm. Functionally, di-iron-containing protein involved in the repair of iron-sulfur clusters damaged by oxidative and nitrosative stress conditions. This Escherichia coli O8 (strain IAI1) protein is Iron-sulfur cluster repair protein YtfE.